The chain runs to 339 residues: Diguanylate cyclase VdcA (339 aa).

The GGDEF domain maps to 206–339 (QQVSLIMLDI…NLGRNRVMPL (134 aa)). Residue aspartate 214 coordinates Mg(2+). Residues asparagine 222 and aspartate 231 each coordinate substrate. Residue glutamate 257 coordinates Mg(2+). The active-site Proton acceptor is glutamate 257.

Requires Mg(2+) as cofactor.

The enzyme catalyses 2 GTP = 3',3'-c-di-GMP + 2 diphosphate. It functions in the pathway purine metabolism; 3',5'-cyclic di-GMP biosynthesis. In terms of biological role, diguanylate cyclase (DGC) that catalyzes the synthesis of cyclic diguanylate (c-di-GMP) via the condensation of 2 GTP molecules. Is involved in the modulation of intracellular c-di-GMP levels. Cyclic-di-GMP is a second messenger which positively regulates biofilm formation and negatively regulates virulence in V.cholerae, and is proposed to play an important role in the transition from persistence in the environment to survival in the host. Overexpression of vdcA results in increased biofilm formation, and reduced motility and virulence. The protein is Diguanylate cyclase VdcA (vdcA) of Vibrio cholerae serotype O1 (strain ATCC 39315 / El Tor Inaba N16961).